Reading from the N-terminus, the 370-residue chain is Formate dehydrogenase (370 aa).

The substrate site is built by Ile94 and Asn120. Residues 175 to 176 (RI), Asp196, 231 to 235 (PLHES), Thr257, Asp283, and 312 to 315 (HMSG) contribute to the NAD(+) site.

It belongs to the D-isomer specific 2-hydroxyacid dehydrogenase family. FDH subfamily. Homodimer.

The protein resides in the cytoplasm. It catalyses the reaction formate + NAD(+) = CO2 + NADH. Catalyzes the NAD(+)-dependent oxidation of formate to carbon dioxide. Formate oxidation is the final step in the methanol oxidation pathway in methylotrophic microorganisms. Has a role in the detoxification of exogenous formate in non-methylotrophic organisms. The chain is Formate dehydrogenase from Chaetomium thermophilum (strain DSM 1495 / CBS 144.50 / IMI 039719) (Thermochaetoides thermophila).